Reading from the N-terminus, the 208-residue chain is Outer-membrane lipoprotein carrier protein (208 aa).

Positions 1–22 (MKKRLCAVLLASPLLFSAAVFA) are cleaved as a signal peptide.

This sequence belongs to the LolA family. Monomer.

It is found in the periplasm. Its function is as follows. Participates in the translocation of lipoproteins from the inner membrane to the outer membrane. Only forms a complex with a lipoprotein if the residue after the N-terminal Cys is not an aspartate (The Asp acts as a targeting signal to indicate that the lipoprotein should stay in the inner membrane). This Shewanella baltica (strain OS223) protein is Outer-membrane lipoprotein carrier protein.